The sequence spans 165 residues: uncharacterized protein (165 aa).

This is an uncharacterized protein from Homo sapiens (Human).